Reading from the N-terminus, the 608-residue chain is Glutamyl-tRNA(Gln) amidotransferase subunit E (608 aa).

The protein belongs to the GatB/GatE family. GatE subfamily. Heterodimer of GatD and GatE.

The catalysed reaction is L-glutamyl-tRNA(Gln) + L-glutamine + ATP + H2O = L-glutaminyl-tRNA(Gln) + L-glutamate + ADP + phosphate + H(+). In terms of biological role, allows the formation of correctly charged Gln-tRNA(Gln) through the transamidation of misacylated Glu-tRNA(Gln) in organisms which lack glutaminyl-tRNA synthetase. The reaction takes place in the presence of glutamine and ATP through an activated gamma-phospho-Glu-tRNA(Gln). The GatDE system is specific for glutamate and does not act on aspartate. The protein is Glutamyl-tRNA(Gln) amidotransferase subunit E of Pyrobaculum aerophilum (strain ATCC 51768 / DSM 7523 / JCM 9630 / CIP 104966 / NBRC 100827 / IM2).